The primary structure comprises 729 residues: Probable ATP-dependent RNA helicase DDX17 (729 aa).

Positions 20–115 are disordered; sequence EAATVASATG…PPKKFGNPGE (96 aa). A Phosphoserine modification is found at S64. Over residues 86-95 the composition is skewed to basic and acidic residues; sequence GDRDRDRDRG. Over residues 96–105 the composition is skewed to gly residues; it reads GFGARGGGGL. N6-acetyllysine; by EP300 occurs at positions 108, 109, and 121. A Glycyl lysine isopeptide (Lys-Gly) (interchain with G-Cter in SUMO); alternate cross-link involves residue K129. K129 participates in a covalent cross-link: Glycyl lysine isopeptide (Lys-Gly) (interchain with G-Cter in SUMO1); alternate. A Glycyl lysine isopeptide (Lys-Gly) (interchain with G-Cter in SUMO2); alternate cross-link involves residue K129. The Q motif motif lies at 171–199; sequence FAFHHANFPQYVMDVLMDQHFTEPTPIQC. The region spanning 202 to 377 is the Helicase ATP-binding domain; sequence FPLALSGRDM…EDFLRDYTQI (176 aa). 215-222 lines the ATP pocket; sequence AQTGSGKT. The short motif at 325–328 is the DEAD box element; sequence DEAD. Residues 405–552 form the Helicase C-terminal domain; sequence KLIQLMEEIM…AINPKLMQLV (148 aa). Residue T523 is modified to Phosphothreonine. Residue K528 forms a Glycyl lysine isopeptide (Lys-Gly) (interchain with G-Cter in SUMO2) linkage. The interval 547–729 is transactivation domain; that stretch reads KLMQLVDHRG…PPPPPPPSRK (183 aa). Disordered stretches follow at residues 551-623 and 659-729; these read LVDH…GSPN and TYGA…PSRK. A compositionally biased stretch (polar residues) spans 568 to 578; sequence RTTSSANNPNL. Over residues 583–610 the composition is skewed to basic and acidic residues; that stretch reads ECDRRLRGVKDGGRRDSASYRDRSETDR. The span at 659–688 shows a compositional bias: low complexity; sequence TYGASSTTSTGRSSQSSSQQFSGIGRSGQQ. R684 is modified (omega-N-methylarginine). Residues 689–698 show a composition bias toward polar residues; the sequence is PQPLMSQQFA. Over residues 717-729 the composition is skewed to pro residues; sequence YPPPPPPPPPSRK. The tract at residues 718–726 is interaction with YAP1; the sequence is PPPPPPPPP.

Belongs to the DEAD box helicase family. DDX5/DBP2 subfamily. As to quaternary structure, interacts with DDX5 in an RNA-independent manner. Interacts with CDK9 transcription elongation complex under basal conditions. Following cell stimulation with poly(I:C), a synthetic double-stranded RNA mimicking viral infection, the interaction with CDK9 is decreased. Interacts with ESR1 in an estrogen-independent manner. Interacts with HNRNPH1; this interaction is important for the regulation of alternative splicing on G-quadruplex structures. At high, but not low, cell density, interacts with DROSHA and DGCR8, the core components of the microprocessor complex involved in the maturation of primary microRNAs (pri-miRNAs) into pre-miRNAs. The interaction with DGCR8 is reduced during mitosis. At low, but not high, cell density, interacts with YAP1 and with its paralog, WWTR1/TAZ. Interactions with DROSHA and YAP1 are mutually exclusive. In vitro, the pre-miRNA processing activity of the DDX17-containing microprocessor complex is weaker than that of the DROSHA/DGCR8 microprocessor complex devoid of DDX17. Interacts with UPF3B. Interacts with NFAT5; this interaction leads to DDX17 recruitment to LNC2 and S100A4 promoters and NFAT5-mediated DDX17-enhanced transactivation. Interacts with HDAC1, HDAC2 and HDAC3; this interaction with HDAC1 and HDAC3, but not HDAC2, depends upon DDX17 acetylation. Interacts with ZC3HAV1 (via N-terminal domain) in an RNA-independent manner. Interacts with EXOSC3/RRP40 and EXOSC5/RRP46; this interaction may be indirect and mediated by ZC3HAV1-binding. Interacts with EP300; this interaction leads to acetylation at lysine residues. Interacts with CREBBP/CBP and KAT2B/P/CAF. Directly interacts with CTNNB1. Interacts with MYOD1. Interacts with TP53. Interacts with DCP1A in an RNA-independent manner. Interacts with DCP2 in an RNA-dependent manner. Interacts with DHX36; this interaction occurs in a RNA-dependent manner. Interacts with ERCC6. Post-translationally, sumoylation significantly increases stability. It also promotes interaction specifically with HDAC1 (but not HDAC2, nor HDAC3) and strongly stimulates ESR1 and TP53 coactivation. In terms of processing, acetylation at lysine residues stabilizes the protein, stimulates interaction with HDAC1 and HDAC3, but not HDAC2, and represses ESR1 and TP53 coactivation activity. In terms of tissue distribution, widely expressed. Low expression, if any, in normal colonic epithelial cells (at protein level). Levels tend to increase during colon cancer progression, from very low in benign hyperplastic polyps to very high in tubular and villous adenomas.

The protein resides in the nucleus. It localises to the nucleolus. The protein localises to the cytoplasm. It is found in the cytosol. It catalyses the reaction ATP + H2O = ADP + phosphate + H(+). In terms of biological role, as an RNA helicase, unwinds RNA and alters RNA structures through ATP binding and hydrolysis. Involved in multiple cellular processes, including pre-mRNA splicing, alternative splicing, ribosomal RNA processing and miRNA processing, as well as transcription regulation. Regulates the alternative splicing of exons exhibiting specific features. For instance, promotes the inclusion of AC-rich alternative exons in CD44 transcripts. This function requires the RNA helicase activity. Affects NFAT5 and histone macro-H2A.1/MACROH2A1 alternative splicing in a CDK9-dependent manner. In NFAT5, promotes the introduction of alternative exon 4, which contains 2 stop codons and may target NFAT5 exon 4-containing transcripts to nonsense-mediated mRNA decay, leading to the down-regulation of NFAT5 protein. Affects splicing of mediators of steroid hormone signaling pathway, including kinases that phosphorylates ESR1, such as CDK2, MAPK1 and GSK3B, and transcriptional regulators, such as CREBBP, MED1, NCOR1 and NCOR2. By affecting GSK3B splicing, participates in ESR1 and AR stabilization. In myoblasts and epithelial cells, cooperates with HNRNPH1 to control the splicing of specific subsets of exons. In addition to binding mature mRNAs, also interacts with certain pri-microRNAs, including MIR663/miR-663a, MIR99B/miR-99b, and MIR6087/miR-6087. Binds pri-microRNAs on the 3' segment flanking the stem loop via the 5'-[ACG]CAUC[ACU]-3' consensus sequence. Required for the production of subsets of microRNAs, including MIR21 and MIR125B1. May be involved not only in microRNA primary transcript processing, but also stabilization. Participates in MYC down-regulation at high cell density through the production of MYC-targeting microRNAs. Along with DDX5, may be involved in the processing of the 32S intermediate into the mature 28S ribosomal RNA. Promoter-specific transcription regulator, functioning as a coactivator or corepressor depending on the context of the promoter and the transcriptional complex in which it exists. Enhances NFAT5 transcriptional activity. Synergizes with TP53 in the activation of the MDM2 promoter; this activity requires acetylation on lysine residues. May also coactivate MDM2 transcription through a TP53-independent pathway. Coactivates MMP7 transcription. Along with CTNNB1, coactivates MYC, JUN, FOSL1 and cyclin D1/CCND1 transcription. Alone or in combination with DDX5 and/or SRA1 non-coding RNA, plays a critical role in promoting the assembly of proteins required for the formation of the transcription initiation complex and chromatin remodeling leading to coactivation of MYOD1-dependent transcription. This helicase-independent activity is required for skeletal muscle cells to properly differentiate into myotubes. During epithelial-to-mesenchymal transition, coregulates SMAD-dependent transcriptional activity, directly controlling key effectors of differentiation, including miRNAs which in turn directly repress its expression. Plays a role in estrogen and testosterone signaling pathway at several levels. Mediates the use of alternative promoters in estrogen-responsive genes and regulates transcription and splicing of a large number of steroid hormone target genes. Contrary to splicing regulation activity, transcriptional coregulation of the estrogen receptor ESR1 is helicase-independent. Plays a role in innate immunity. Specifically restricts bunyavirus infection, including Rift Valley fever virus (RVFV) or La Crosse virus (LACV), but not vesicular stomatitis virus (VSV), in an interferon- and DROSHA-independent manner. Binds to RVFV RNA, likely via structured viral RNA elements. Promotes mRNA degradation mediated by the antiviral zinc-finger protein ZC3HAV1, in an ATPase-dependent manner. The polypeptide is Probable ATP-dependent RNA helicase DDX17 (DDX17) (Homo sapiens (Human)).